The sequence spans 316 residues: Methionyl-tRNA formyltransferase (316 aa).

112–115 is a binding site for (6S)-5,6,7,8-tetrahydrofolate; sequence SLLP.

It belongs to the Fmt family.

The catalysed reaction is L-methionyl-tRNA(fMet) + (6R)-10-formyltetrahydrofolate = N-formyl-L-methionyl-tRNA(fMet) + (6S)-5,6,7,8-tetrahydrofolate + H(+). Its function is as follows. Attaches a formyl group to the free amino group of methionyl-tRNA(fMet). The formyl group appears to play a dual role in the initiator identity of N-formylmethionyl-tRNA by promoting its recognition by IF2 and preventing the misappropriation of this tRNA by the elongation apparatus. The chain is Methionyl-tRNA formyltransferase from Psychromonas ingrahamii (strain DSM 17664 / CCUG 51855 / 37).